Reading from the N-terminus, the 229-residue chain is Ribonuclease 3 (229 aa).

The RNase III domain maps to 4-133; it reads WEELQESVGF…FIGALYLDNG (130 aa). Position 46 (E46) interacts with Mg(2+). D50 is an active-site residue. Mg(2+) contacts are provided by D119 and E122. Residue E122 is part of the active site. The 70-residue stretch at 159–228 folds into the DRBM domain; sequence DYKTQLQEIV…AQFAINQLTH (70 aa).

The protein belongs to the ribonuclease III family. Homodimer. It depends on Mg(2+) as a cofactor.

Its subcellular location is the cytoplasm. It catalyses the reaction Endonucleolytic cleavage to 5'-phosphomonoester.. Its function is as follows. Digests double-stranded RNA. Involved in the processing of primary rRNA transcript to yield the immediate precursors to the large and small rRNAs (23S and 16S). Processes some mRNAs, and tRNAs when they are encoded in the rRNA operon. Processes pre-crRNA and tracrRNA of type II CRISPR loci if present in the organism. The protein is Ribonuclease 3 of Listeria welshimeri serovar 6b (strain ATCC 35897 / DSM 20650 / CCUG 15529 / CIP 8149 / NCTC 11857 / SLCC 5334 / V8).